Reading from the N-terminus, the 311-residue chain is Phosphoribosylaminoimidazole-succinocarboxamide synthase (311 aa).

The protein belongs to the SAICAR synthetase family.

The catalysed reaction is 5-amino-1-(5-phospho-D-ribosyl)imidazole-4-carboxylate + L-aspartate + ATP = (2S)-2-[5-amino-1-(5-phospho-beta-D-ribosyl)imidazole-4-carboxamido]succinate + ADP + phosphate + 2 H(+). It functions in the pathway purine metabolism; IMP biosynthesis via de novo pathway; 5-amino-1-(5-phospho-D-ribosyl)imidazole-4-carboxamide from 5-amino-1-(5-phospho-D-ribosyl)imidazole-4-carboxylate: step 1/2. In Azoarcus sp. (strain BH72), this protein is Phosphoribosylaminoimidazole-succinocarboxamide synthase.